Consider the following 631-residue polypeptide: tRNA uridine 5-carboxymethylaminomethyl modification enzyme MnmG (631 aa).

FAD contacts are provided by residues 15–20, Ile-127, and Ser-182; that span reads GAGHAG. 276 to 290 contributes to the NAD(+) binding site; that stretch reads GPRYCPSIEDKIVRF. Gln-373 contributes to the FAD binding site.

It belongs to the MnmG family. Homodimer. Heterotetramer of two MnmE and two MnmG subunits. It depends on FAD as a cofactor.

The protein localises to the cytoplasm. In terms of biological role, NAD-binding protein involved in the addition of a carboxymethylaminomethyl (cmnm) group at the wobble position (U34) of certain tRNAs, forming tRNA-cmnm(5)s(2)U34. The chain is tRNA uridine 5-carboxymethylaminomethyl modification enzyme MnmG from Streptococcus mutans serotype c (strain ATCC 700610 / UA159).